The chain runs to 364 residues: Histidinol-phosphate aminotransferase (364 aa).

Lys224 bears the N6-(pyridoxal phosphate)lysine mark.

Belongs to the class-II pyridoxal-phosphate-dependent aminotransferase family. Histidinol-phosphate aminotransferase subfamily. Homodimer. Pyridoxal 5'-phosphate serves as cofactor.

The enzyme catalyses L-histidinol phosphate + 2-oxoglutarate = 3-(imidazol-4-yl)-2-oxopropyl phosphate + L-glutamate. Its pathway is amino-acid biosynthesis; L-histidine biosynthesis; L-histidine from 5-phospho-alpha-D-ribose 1-diphosphate: step 7/9. The sequence is that of Histidinol-phosphate aminotransferase from Anaeromyxobacter sp. (strain Fw109-5).